An 82-amino-acid polypeptide reads, in one-letter code: UPF0410 protein YeaQ (82 aa).

The next 2 membrane-spanning stretches (helical) occupy residues 26 to 46 and 57 to 77; these read GGGF…GGWI and GFNF…LFIY.

It belongs to the UPF0410 family.

It localises to the cell inner membrane. The sequence is that of UPF0410 protein YeaQ (yeaQ) from Escherichia coli O157:H7.